We begin with the raw amino-acid sequence, 227 residues long: Lipoprotein-releasing system ATP-binding protein LolD (227 aa).

An ABC transporter domain is found at 6 to 227 (LKIEGLRKTY…HLEDGVLVER (222 aa)). 43-50 (APSGAGKS) serves as a coordination point for ATP.

This sequence belongs to the ABC transporter superfamily. Lipoprotein translocase (TC 3.A.1.125) family. In terms of assembly, the complex is composed of two ATP-binding proteins (LolD) and two transmembrane proteins (LolC and LolE).

The protein localises to the cell inner membrane. Functionally, part of the ABC transporter complex LolCDE involved in the translocation of mature outer membrane-directed lipoproteins, from the inner membrane to the periplasmic chaperone, LolA. Responsible for the formation of the LolA-lipoprotein complex in an ATP-dependent manner. In Ruegeria sp. (strain TM1040) (Silicibacter sp.), this protein is Lipoprotein-releasing system ATP-binding protein LolD.